The sequence spans 142 residues: Large ribosomal subunit protein uL13 (142 aa).

This sequence belongs to the universal ribosomal protein uL13 family. As to quaternary structure, part of the 50S ribosomal subunit.

In terms of biological role, this protein is one of the early assembly proteins of the 50S ribosomal subunit, although it is not seen to bind rRNA by itself. It is important during the early stages of 50S assembly. The chain is Large ribosomal subunit protein uL13 from Vibrio cholerae serotype O1 (strain M66-2).